The chain runs to 519 residues: Light-independent protochlorophyllide reductase subunit B (519 aa).

Position 36 (aspartate 36) interacts with [4Fe-4S] cluster. Catalysis depends on aspartate 274, which acts as the Proton donor. Position 409–410 (409–410 (GL)) interacts with substrate. The interval 426 to 465 (DEAGPSHHGGHSPKPSEAARTPDKVEERADPAPEAPQTGS) is disordered. Residues 445 to 456 (RTPDKVEERADP) are compositionally biased toward basic and acidic residues.

Belongs to the ChlB/BchB/BchZ family. Protochlorophyllide reductase is composed of three subunits; BchL, BchN and BchB. Forms a heterotetramer of two BchB and two BchN subunits. [4Fe-4S] cluster is required as a cofactor.

The catalysed reaction is chlorophyllide a + oxidized 2[4Fe-4S]-[ferredoxin] + 2 ADP + 2 phosphate = protochlorophyllide a + reduced 2[4Fe-4S]-[ferredoxin] + 2 ATP + 2 H2O. Its pathway is porphyrin-containing compound metabolism; bacteriochlorophyll biosynthesis (light-independent). Functionally, component of the dark-operative protochlorophyllide reductase (DPOR) that uses Mg-ATP and reduced ferredoxin to reduce ring D of protochlorophyllide (Pchlide) to form chlorophyllide a (Chlide). This reaction is light-independent. The NB-protein (BchN-BchB) is the catalytic component of the complex. This Jannaschia sp. (strain CCS1) protein is Light-independent protochlorophyllide reductase subunit B.